The sequence spans 479 residues: Aryl-phospho-beta-D-glucosidase BglA (479 aa).

Glu-176 acts as the Proton donor in catalysis. The active-site Nucleophile is the Glu-377.

The protein belongs to the glycosyl hydrolase 1 family.

The catalysed reaction is 6-phospho-beta-D-glucosyl-(1-&gt;4)-D-glucose + H2O = D-glucose 6-phosphate + D-glucose. Catalyzes the hydrolysis of aryl-phospho-beta-D-glucosides such as 4-methylumbelliferyl-phospho-beta-D-glucopyranoside (MUG-P), phosphoarbutin and phosphosalicin. Plays a major role in the utilization of arbutin or salicin as the sole carbon source. BglA and BglH are the major proteins contributing to hydrolysis of MUG-P by extracts of late-exponential-phase or stationary-phase B.subtilis cells. The sequence is that of Aryl-phospho-beta-D-glucosidase BglA (bglA) from Bacillus subtilis (strain 168).